A 334-amino-acid polypeptide reads, in one-letter code: L-lactate dehydrogenase B chain (334 aa).

Ala2 carries the N-acetylalanine modification. Lys7 carries the N6-acetyllysine modification. Position 44 is a phosphoserine (Ser44). NAD(+) is bound by residues 53–58 (DVLEDK) and Arg100. Lys58 is subject to N6-acetyllysine. Residue Arg107 participates in substrate binding. Lys119 is modified (N6-acetyllysine). Asn139 serves as a coordination point for NAD(+). Substrate-binding residues include Asn139 and Arg170. His194 serves as the catalytic Proton acceptor. A Phosphotyrosine modification is found at Tyr240. Thr249 provides a ligand contact to substrate. At Lys329 the chain carries N6-acetyllysine.

Belongs to the LDH/MDH superfamily. LDH family. Homotetramer. Interacts with PTEN upstream reading frame protein MP31; the interaction leads to inhibition of mitochondrial lactate dehydrogenase activity, preventing conversion of lactate to pyruvate in mitochondria.

It localises to the cytoplasm. It is found in the mitochondrion inner membrane. The catalysed reaction is (S)-lactate + NAD(+) = pyruvate + NADH + H(+). It functions in the pathway fermentation; pyruvate fermentation to lactate; (S)-lactate from pyruvate: step 1/1. Interconverts simultaneously and stereospecifically pyruvate and lactate with concomitant interconversion of NADH and NAD(+). In Monodelphis domestica (Gray short-tailed opossum), this protein is L-lactate dehydrogenase B chain (LDHB).